The chain runs to 286 residues: CCR4-NOT transcription complex subunit 7 (286 aa).

The a divalent metal cation site is built by D40, E42, D161, D230, and E278.

Belongs to the CAF1 family. As to quaternary structure, component of the CCR4-NOT complex. Mn(2+) serves as cofactor. The cofactor is Mg(2+). It depends on Co(2+) as a cofactor.

The protein resides in the nucleus. It is found in the cytoplasm. It carries out the reaction Exonucleolytic cleavage of poly(A) to 5'-AMP.. Has 3'-5' poly(A) exoribonuclease activity for synthetic poly(A) RNA substrate. Catalytic component of the CCR4-NOT complex which is one of the major cellular mRNA deadenylases and is linked to various cellular processes including bulk mRNA degradation, miRNA-mediated repression, translational repression during translational initiation and general transcription regulation. During miRNA-mediated repression the complex also seems to act as translational repressor during translational initiation. Additional complex functions may be a consequence of its influence on mRNA expression. This is CCR4-NOT transcription complex subunit 7 (cnot7) from Danio rerio (Zebrafish).